Here is a 241-residue protein sequence, read N- to C-terminus: Phosphoribosylformylglycinamidine synthase subunit PurQ (241 aa).

The region spanning 6 to 241 (NVGIVVFPGS…QSLLLASAFA (236 aa)) is the Glutamine amidotransferase type-1 domain. The active-site Nucleophile is the cysteine 90. Catalysis depends on residues histidine 207 and glutamate 209.

Part of the FGAM synthase complex composed of 1 PurL, 1 PurQ and 2 PurS subunits.

Its subcellular location is the cytoplasm. It carries out the reaction N(2)-formyl-N(1)-(5-phospho-beta-D-ribosyl)glycinamide + L-glutamine + ATP + H2O = 2-formamido-N(1)-(5-O-phospho-beta-D-ribosyl)acetamidine + L-glutamate + ADP + phosphate + H(+). The enzyme catalyses L-glutamine + H2O = L-glutamate + NH4(+). Its pathway is purine metabolism; IMP biosynthesis via de novo pathway; 5-amino-1-(5-phospho-D-ribosyl)imidazole from N(2)-formyl-N(1)-(5-phospho-D-ribosyl)glycinamide: step 1/2. Its function is as follows. Part of the phosphoribosylformylglycinamidine synthase complex involved in the purines biosynthetic pathway. Catalyzes the ATP-dependent conversion of formylglycinamide ribonucleotide (FGAR) and glutamine to yield formylglycinamidine ribonucleotide (FGAM) and glutamate. The FGAM synthase complex is composed of three subunits. PurQ produces an ammonia molecule by converting glutamine to glutamate. PurL transfers the ammonia molecule to FGAR to form FGAM in an ATP-dependent manner. PurS interacts with PurQ and PurL and is thought to assist in the transfer of the ammonia molecule from PurQ to PurL. This is Phosphoribosylformylglycinamidine synthase subunit PurQ from Thermosynechococcus vestitus (strain NIES-2133 / IAM M-273 / BP-1).